We begin with the raw amino-acid sequence, 296 residues long: Probable AP endonuclease (296 aa).

An intrachain disulfide couples Cys-16 to Cys-20. Zn(2+)-binding residues include His-78, His-115, Glu-142, His-182, His-218, Asp-231, His-233, and Glu-271.

It belongs to the AP endonuclease 2 family. The cofactor is Zn(2+).

The protein resides in the host nucleus. The protein localises to the host cytoplasm. It localises to the virion. Endonuclease of the viral base excision repair system that catalyzes DNA cleavage reaction at the apurinic or apyrimidinic sites (AP sites). Cleaves phosphodiester bonds on the 5' side of AP sites. In addition to endonuclease activity, the AP endonuclease has a proofreading 3'-5' exonuclease activity that is considerably more efficient in the elimination of a mismatch than in that of a correctly paired base. Displays 3'-phosphatase and 3'-repair diesterase activities. The single nucleotide gaps generated by the AP endonuclease are filled by the viral repair DNA polymerase X and the DNA ligase. This chain is Probable AP endonuclease, found in Ornithodoros (relapsing fever ticks).